A 265-amino-acid polypeptide reads, in one-letter code: Cytosolic Fe-S cluster assembly factor NUBP2 homolog (265 aa).

22-29 (GKGGVGKS) contributes to the ATP binding site. [4Fe-4S] cluster is bound by residues cysteine 196 and cysteine 199.

The protein belongs to the Mrp/NBP35 ATP-binding proteins family. NUBP2/CFD1 subfamily. In terms of assembly, heterotetramer of 2 NUBP1 and 2 NUBP2 chains. It depends on [4Fe-4S] cluster as a cofactor.

The protein resides in the cytoplasm. In terms of biological role, component of the cytosolic iron-sulfur (Fe/S) protein assembly (CIA) machinery. Required for maturation of extramitochondrial Fe-S proteins. The NUBP1-NUBP2 heterotetramer forms a Fe-S scaffold complex, mediating the de novo assembly of an Fe-S cluster and its transfer to target apoproteins. The chain is Cytosolic Fe-S cluster assembly factor NUBP2 homolog from Trichoplax adhaerens (Trichoplax reptans).